We begin with the raw amino-acid sequence, 260 residues long: Large ribosomal subunit protein uL2 (260 aa).

A disordered region spans residues 1 to 24 (MGRVIRAQRKGAGSVFKSHTHHRK).

Belongs to the universal ribosomal protein uL2 family.

The protein resides in the cytoplasm. The chain is Large ribosomal subunit protein uL2 (RPL8) from Solanum lycopersicum (Tomato).